The sequence spans 483 residues: Ero1-like protein (483 aa).

The first 29 residues, 1 to 29 (MTTRTVQRNLWASAAVVLVLLLLWTDTTG), serve as a signal peptide directing secretion. 6 disulfide bridges follow: C44-C57, C46-C55, C94-C402, C103-C108, C227-C251, and C405-C408. Residues R206, T208, and W219 each coordinate FAD. N-linked (GlcNAc...) asparagine glycosylation is present at N232. FAD contacts are provided by S262, H265, and R301. N-linked (GlcNAc...) asparagine glycosylation occurs at N395.

Belongs to the EROs family. In terms of assembly, may function both as a monomer and a homodimer. FAD is required as a cofactor.

The protein localises to the endoplasmic reticulum membrane. Its function is as follows. Oxidoreductase involved in disulfide bond formation in the endoplasmic reticulum. Efficiently reoxidizes pdi-1, the enzyme catalyzing protein disulfide formation, in order to allow pdi-1 to sustain additional rounds of disulfide formation. Following pdi reoxidation, passes its electrons to molecular oxygen via FAD, leading to the production of reactive oxygen species (ROS) in the cell. This Drosophila melanogaster (Fruit fly) protein is Ero1-like protein (Ero1L).